The following is a 426-amino-acid chain: Putative acid phosphatase 1 (426 aa).

A signal peptide spans 1 to 18; sequence MRVLFYVSILVIIASVHT. Over 19 to 388 the chain is Extracellular; the sequence is QLISVHVIFR…SEWVMTPLSW (370 aa). His-29 serves as the catalytic Nucleophile. Residues Asn-37 and Asn-145 are each glycosylated (N-linked (GlcNAc...) asparagine). Cysteines 133 and 369 form a disulfide. The active-site Proton donor is Asp-276. The helical transmembrane segment at 389–409 threads the bilayer; that stretch reads IIVAIAILLLIALILMTYFVI. The Cytoplasmic portion of the chain corresponds to 410–426; it reads RYKNRSIVNIKKLSLEN.

It belongs to the histidine acid phosphatase family.

The protein resides in the membrane. The catalysed reaction is a phosphate monoester + H2O = an alcohol + phosphate. In Caenorhabditis elegans, this protein is Putative acid phosphatase 1.